Consider the following 496-residue polypeptide: WD repeat-containing protein 37 (496 aa).

Polar residues-rich tracts occupy residues 1–13 and 22–31; these read MPTE…TARQ and SLSIRRTNSS. The tract at residues 1–50 is disordered; sequence MPTESGSCSTARQAKQKRKSHSLSIRRTNSSEQERTGLPREMLEGQDSKL. The segment covering 32–47 has biased composition (basic and acidic residues); that stretch reads EQERTGLPREMLEGQD. WD repeat units follow at residues 154–194 and 197–236; these read GHRD…CLVK and GHVG…PTPQ. Residues 238 to 267 form a disordered region; that stretch reads VADTSQQISGEDEIECSDKDEPDIDGDVSS. Residues 247-265 show a composition bias toward acidic residues; sequence GEDEIECSDKDEPDIDGDV. WD repeat units follow at residues 281 to 320, 323 to 362, 367 to 405, 408 to 447, and 454 to 495; these read SHQG…LVHS, GHDQ…IHSV, GHTD…SPIA, RTDS…LARL, and GHRR…LLQE.

In terms of assembly, forms homodimers. Interacts with PACS1. Interacts with PACS2.

It localises to the cytoplasm. The protein localises to the nucleus. Functionally, required for normal ER Ca2+ handling in lymphocytes. Together with PACS1, it plays an essential role in stabilizing peripheral lymphocyte populations. This chain is WD repeat-containing protein 37 (Wdr37), found in Mus musculus (Mouse).